We begin with the raw amino-acid sequence, 371 residues long: Glycosyltransferase 8 domain-containing protein 1 (371 aa).

Topologically, residues 1–7 are cytoplasmic; sequence MSFRKVN. A helical; Signal-anchor for type II membrane protein membrane pass occupies residues 8 to 28; it reads IIIWVLAVVLFLLVLHHNFLS. The Lumenal portion of the chain corresponds to 29–371; it reads LSSLLKNDIS…RRHMDTSNIK (343 aa). Asn257 carries N-linked (GlcNAc...) asparagine glycosylation.

Belongs to the glycosyltransferase 8 family.

Its subcellular location is the membrane. This Mus musculus (Mouse) protein is Glycosyltransferase 8 domain-containing protein 1 (Glt8d1).